The following is a 450-amino-acid chain: NAD-specific glutamate dehydrogenase (450 aa).

Substrate contacts are provided by Lys-90, Gln-111, and Lys-114. The Proton donor role is filled by Lys-126. Residue Gly-165 coordinates substrate. NAD(+) contacts are provided by Thr-210 and Asn-241. Ser-381 lines the substrate pocket.

This sequence belongs to the Glu/Leu/Phe/Val dehydrogenases family. Homohexamer.

The enzyme catalyses L-glutamate + NAD(+) + H2O = 2-oxoglutarate + NH4(+) + NADH + H(+). It participates in amino-acid degradation; L-glutamate degradation via hydroxyglutarate pathway; crotonoyl-CoA from L-glutamate: step 1/5. This chain is NAD-specific glutamate dehydrogenase (gdh), found in Clostridium symbiosum (Bacteroides symbiosus).